The chain runs to 275 residues: Anamorsin homolog (275 aa).

The interval Met-1 to Gly-147 is N-terminal SAM-like domain. A linker region spans residues Arg-148–Met-183. [2Fe-2S] cluster is bound by residues Cys-203, Cys-209, Cys-212, and Cys-214. The segment at Cys-203–Cys-214 is fe-S binding site A. Residues Cys-238, Cys-241, Cys-249, and Cys-252 each coordinate [4Fe-4S] cluster. 2 short sequence motifs (cx2C motif) span residues Cys-238 to Cys-241 and Cys-249 to Cys-252. The interval Cys-238 to Cys-252 is fe-S binding site B.

This sequence belongs to the anamorsin family. Monomer. It depends on [2Fe-2S] cluster as a cofactor. [4Fe-4S] cluster is required as a cofactor.

It localises to the cytoplasm. The protein resides in the mitochondrion intermembrane space. Functionally, component of the cytosolic iron-sulfur (Fe-S) protein assembly (CIA) machinery. Required for the maturation of extramitochondrial Fe-S proteins. Part of an electron transfer chain functioning in an early step of cytosolic Fe-S biogenesis, facilitating the de novo assembly of a [4Fe-4S] cluster on the cytosolic Fe-S scaffold complex. Electrons are transferred from NADPH via a FAD- and FMN-containing diflavin oxidoreductase. Together with the diflavin oxidoreductase, also required for the assembly of the diferric tyrosyl radical cofactor of ribonucleotide reductase (RNR), probably by providing electrons for reduction during radical cofactor maturation in the catalytic small subunit. This Thalassiosira pseudonana (Marine diatom) protein is Anamorsin homolog.